The sequence spans 123 residues: Large ribosomal subunit protein eL8 (123 aa).

It belongs to the eukaryotic ribosomal protein eL8 family. Part of the 50S ribosomal subunit. Probably part of the RNase P complex.

It is found in the cytoplasm. Functionally, multifunctional RNA-binding protein that recognizes the K-turn motif in ribosomal RNA, the RNA component of RNase P, box H/ACA, box C/D and box C'/D' sRNAs. In Thermococcus kodakarensis (strain ATCC BAA-918 / JCM 12380 / KOD1) (Pyrococcus kodakaraensis (strain KOD1)), this protein is Large ribosomal subunit protein eL8.